We begin with the raw amino-acid sequence, 289 residues long: MPLIFKIGYNVIPLQDVILPTPSSKVLKYLIQSGKLIPSLKDLITSRDKYKPIFISHLGFNQRRIFQTNGNLKTITKGSRLSSIIAFSTQANVLSEVADEGIFETVYGKFHIMIESIEIVEVEKLKEEVEKHMNDNIRVRFVSPTLLSSKVLLPPSLSERYKKIHAGYSTLPSVGLIVAYAYNVYCNLIGKKEVEVRAFKFGILSNALSRIIGYDLHPVTVAIGEDSKGNLRKARGVMGWIEFDIPDERLKRRALNYLLTSSYLGIGRSRGIGFGEIRLEFRKIEEKEG.

The protein belongs to the CRISPR-associated endoribonuclease Cas6 family. As to quaternary structure, possibly part of the aCascade ribonucleoprotein complex. Requires Mg(2+) as cofactor.

In terms of biological role, CRISPR (clustered regularly interspaced short palindromic repeat) is an adaptive immune system that provides protection against mobile genetic elements (viruses, transposable elements and conjugative plasmids). CRISPR clusters contain sequences complementary to antecedent mobile elements and target invading nucleic acids. CRISPR clusters are transcribed and processed into CRISPR RNA (crRNA). Functions as a ssRNA-specific endoribonuclease, generating an 8 base-long tag known as the 5' handle. This Saccharolobus solfataricus (strain ATCC 35092 / DSM 1617 / JCM 11322 / P2) (Sulfolobus solfataricus) protein is CRISPR-associated endoribonuclease Cas6 2 (cas6b).